We begin with the raw amino-acid sequence, 792 residues long: Cullin-4 (792 aa).

Residues 1–10 (MSLPTKRSTF) are compositionally biased toward polar residues. A disordered region spans residues 1–43 (MSLPTKRSTFSAASASDDSSYSSPPMKKAKNDLHHSPQHPNTA). Residues 11 to 23 (SAASASDDSSYSS) are compositionally biased toward low complexity. A Cullin neddylation domain is found at 724 to 784 (DRQYQIDAAI…REYLEREKSN (61 aa)). Lysine 738 is covalently cross-linked (Glycyl lysine isopeptide (Lys-Gly) (interchain with G-Cter in NEDD8)).

Belongs to the cullin family. As to quaternary structure, interacts with COP10, CSN3, CSN4, CSN5, CSN8, DDB1A, DDB1B, DDB2, DET1 and RBX1. In terms of processing, neddylated (rubylated). Deneddylated via its interaction with the COP9 signalosome (CSN) complex. Ubiquitous.

The protein localises to the nucleus. The protein operates within protein modification; protein ubiquitination. Component of the CUL4-RBX1-CDD (COP10-DDB1a-DET1) E3 ubiquitin-protein ligase complex which mediates the ubiquitination and subsequent proteasomal degradation of target proteins. Participates in the CDD complex to light-mediated control of development. May repress photomorphogenesis through enhancing COP1 E3 ubiquitin-protein ligase activity. Acts together with the CUL4-DDB1-COP1-SPA E3 ubiquitin-protein ligase complexes in the repression of photomorphogenesis and flowering time. Component ot the CUL4-RBX1-DDB1-PRL1 E3 ubiquitin-protein ligase complex which mediates ubiquitination and subsequent degradation of AKIN10. Component of the CUL4-RBX1-DDB1-DWA1/DWA2 E3 ubiquitin-protein ligase complex that acts as a negative regulator in abscisic acid (ABA) signaling and may target ABI5 for degradation. This chain is Cullin-4 (CUL4), found in Arabidopsis thaliana (Mouse-ear cress).